Reading from the N-terminus, the 348-residue chain is RNA 3'-terminal phosphate cyclase (348 aa).

Residues Q107 and 290–294 (HLADQ) each bind ATP. H316 acts as the Tele-AMP-histidine intermediate in catalysis.

It belongs to the RNA 3'-terminal cyclase family. Type 1 subfamily.

The protein localises to the cytoplasm. The enzyme catalyses a 3'-end 3'-phospho-ribonucleotide-RNA + ATP = a 3'-end 2',3'-cyclophospho-ribonucleotide-RNA + AMP + diphosphate. Functionally, catalyzes the conversion of 3'-phosphate to a 2',3'-cyclic phosphodiester at the end of RNA. The mechanism of action of the enzyme occurs in 3 steps: (A) adenylation of the enzyme by ATP; (B) transfer of adenylate to an RNA-N3'P to produce RNA-N3'PP5'A; (C) and attack of the adjacent 2'-hydroxyl on the 3'-phosphorus in the diester linkage to produce the cyclic end product. The biological role of this enzyme is unknown but it is likely to function in some aspects of cellular RNA processing. In Nostoc punctiforme (strain ATCC 29133 / PCC 73102), this protein is RNA 3'-terminal phosphate cyclase.